Reading from the N-terminus, the 148-residue chain is MKYQQLENLEAGWKWMYLFNKHRMGESITCYIDSSEEQQMVNVFLKLEHEPVHVLEWIQKHMNPDLQNKLKQAIRAKRKRHFNAEQEHTRKKSIDLDYRVWEKLSLRAQELDSTLSDTIEYLLSEASRTEKASQTVSSLKADLHELLK.

The protein belongs to the MatP family. In terms of assembly, homodimer.

Its subcellular location is the cytoplasm. Functionally, required for spatial organization of the terminus region of the chromosome (Ter macrodomain) during the cell cycle. Prevents early segregation of duplicated Ter macrodomains during cell division. Binds specifically to matS, which is a 13 bp signature motif repeated within the Ter macrodomain. The polypeptide is Macrodomain Ter protein (Aliivibrio salmonicida (strain LFI1238) (Vibrio salmonicida (strain LFI1238))).